The primary structure comprises 210 residues: N-(5'-phosphoribosyl)anthranilate isomerase (210 aa).

The protein belongs to the TrpF family.

The catalysed reaction is N-(5-phospho-beta-D-ribosyl)anthranilate = 1-(2-carboxyphenylamino)-1-deoxy-D-ribulose 5-phosphate. It functions in the pathway amino-acid biosynthesis; L-tryptophan biosynthesis; L-tryptophan from chorismate: step 3/5. In Staphylococcus aureus (strain MRSA252), this protein is N-(5'-phosphoribosyl)anthranilate isomerase.